The chain runs to 428 residues: 3-phosphoshikimate 1-carboxyvinyltransferase (428 aa).

Positions 22, 23, and 27 each coordinate 3-phosphoshikimate. Lysine 22 contributes to the phosphoenolpyruvate binding site. Residues glycine 96 and arginine 124 each contribute to the phosphoenolpyruvate site. 3-phosphoshikimate is bound by residues serine 171, serine 172, glutamine 173, serine 198, aspartate 311, and lysine 338. Glutamine 173 provides a ligand contact to phosphoenolpyruvate. Aspartate 311 functions as the Proton acceptor in the catalytic mechanism. Residues arginine 342 and arginine 383 each coordinate phosphoenolpyruvate.

This sequence belongs to the EPSP synthase family. As to quaternary structure, monomer.

It is found in the cytoplasm. The enzyme catalyses 3-phosphoshikimate + phosphoenolpyruvate = 5-O-(1-carboxyvinyl)-3-phosphoshikimate + phosphate. The protein operates within metabolic intermediate biosynthesis; chorismate biosynthesis. Catalyzes the transfer of the enolpyruvyl moiety of phosphoenolpyruvate (PEP) to the 5-hydroxyl of shikimate-3-phosphate (S3P) to produce enolpyruvyl shikimate-3-phosphate and inorganic phosphate. The sequence is that of 3-phosphoshikimate 1-carboxyvinyltransferase from Methanopyrus kandleri (strain AV19 / DSM 6324 / JCM 9639 / NBRC 100938).